A 515-amino-acid polypeptide reads, in one-letter code: Endoglucanase 2 (515 aa).

Residues 1–31 (MVAKPRSRCCCCSVFIGVIILIAIIIAVIFT) form the signal peptide. N-linked (GlcNAc...) asparagine glycosylation is present at Asn-37. Asp-100 functions as the Nucleophile in the catalytic mechanism. A glycan (N-linked (GlcNAc...) asparagine) is linked at Asn-250. The active site involves His-433. Residue Asn-475 is glycosylated (N-linked (GlcNAc...) asparagine). Asp-480 is an active-site residue. A glycan (N-linked (GlcNAc...) asparagine) is linked at Asn-483. Residue Glu-489 is part of the active site.

Belongs to the glycosyl hydrolase 9 (cellulase E) family.

It is found in the secreted. The enzyme catalyses Endohydrolysis of (1-&gt;4)-beta-D-glucosidic linkages in cellulose, lichenin and cereal beta-D-glucans.. This chain is Endoglucanase 2, found in Arabidopsis thaliana (Mouse-ear cress).